We begin with the raw amino-acid sequence, 346 residues long: Deoxyhypusine hydroxylase (346 aa).

HEAT-like PBS-type repeat units follow at residues 71 to 100 (VLLR…LNDT), 104 to 133 (LMVR…LNDE), 213 to 242 (LKLR…LIKD), 246 to 275 (AIFR…LQNV), and 279 to 320 (EMVR…SKDA). Fe cation contacts are provided by histidine 75, histidine 108, and glutamate 109. Fe cation-binding residues include histidine 250, histidine 283, and glutamate 284.

This sequence belongs to the deoxyhypusine hydroxylase family. The cofactor is Fe(2+).

It carries out the reaction [eIF5A protein]-deoxyhypusine + AH2 + O2 = [eIF5A protein]-hypusine + A + H2O. The protein operates within protein modification; eIF5A hypusination. Functionally, catalyzes the hydroxylation of the N(6)-(4-aminobutyl)-L-lysine intermediate produced by deoxyhypusine synthase/DHPS on a critical lysine of the eukaryotic translation initiation factor 5A/eIF-5A. This is the second step of the post-translational modification of that lysine into an unusual amino acid residue named hypusine. Hypusination is unique to mature eIF-5A factor and is essential for its function. The sequence is that of Deoxyhypusine hydroxylase from Plasmodium vivax (strain Salvador I).